The primary structure comprises 954 residues: Glycine dehydrogenase (decarboxylating) (954 aa).

K699 is modified (N6-(pyridoxal phosphate)lysine).

Belongs to the GcvP family. In terms of assembly, the glycine cleavage system is composed of four proteins: P, T, L and H. Pyridoxal 5'-phosphate is required as a cofactor.

It carries out the reaction N(6)-[(R)-lipoyl]-L-lysyl-[glycine-cleavage complex H protein] + glycine + H(+) = N(6)-[(R)-S(8)-aminomethyldihydrolipoyl]-L-lysyl-[glycine-cleavage complex H protein] + CO2. The glycine cleavage system catalyzes the degradation of glycine. The P protein binds the alpha-amino group of glycine through its pyridoxal phosphate cofactor; CO(2) is released and the remaining methylamine moiety is then transferred to the lipoamide cofactor of the H protein. This is Glycine dehydrogenase (decarboxylating) from Nitrobacter winogradskyi (strain ATCC 25391 / DSM 10237 / CIP 104748 / NCIMB 11846 / Nb-255).